Consider the following 305-residue polypeptide: Transcription factor MYB87 (305 aa).

HTH myb-type domains lie at 9–66 (KMAV…RPNL) and 67–117 (KHGG…KKKL). 2 consecutive DNA-binding regions (H-T-H motif) follow at residues 38–62 (WISL…LNYL) and 90–113 (WSII…NTRL).

As to expression, expressed in roots, leaves, internodes, shoot tips and flowers.

Its subcellular location is the nucleus. Functionally, transcription factor that functions as a regulator of genes affecting cell wall organization and remodeling. Activates genes related to the primary cell wall and represses genes related to the secondary cell wall and expansins. Required for the regulation of longitudinal cell growth in stems, leaves, petioles, roots, flowers and siliques. The sequence is that of Transcription factor MYB87 from Arabidopsis thaliana (Mouse-ear cress).